A 257-amino-acid chain; its full sequence is Pyridoxine 5'-phosphate synthase (257 aa).

N6 provides a ligand contact to 3-amino-2-oxopropyl phosphate. 8–9 serves as a coordination point for 1-deoxy-D-xylulose 5-phosphate; that stretch reads DH. R17 serves as a coordination point for 3-amino-2-oxopropyl phosphate. The active-site Proton acceptor is H42. R44 and H49 together coordinate 1-deoxy-D-xylulose 5-phosphate. Catalysis depends on E69, which acts as the Proton acceptor. T99 contributes to the 1-deoxy-D-xylulose 5-phosphate binding site. The active-site Proton donor is H211. 3-amino-2-oxopropyl phosphate contacts are provided by residues G212 and 233–234; that span reads GQ.

Belongs to the PNP synthase family. In terms of assembly, homooctamer; tetramer of dimers.

Its subcellular location is the cytoplasm. The catalysed reaction is 3-amino-2-oxopropyl phosphate + 1-deoxy-D-xylulose 5-phosphate = pyridoxine 5'-phosphate + phosphate + 2 H2O + H(+). The protein operates within cofactor biosynthesis; pyridoxine 5'-phosphate biosynthesis; pyridoxine 5'-phosphate from D-erythrose 4-phosphate: step 5/5. Functionally, catalyzes the complicated ring closure reaction between the two acyclic compounds 1-deoxy-D-xylulose-5-phosphate (DXP) and 3-amino-2-oxopropyl phosphate (1-amino-acetone-3-phosphate or AAP) to form pyridoxine 5'-phosphate (PNP) and inorganic phosphate. The protein is Pyridoxine 5'-phosphate synthase of Campylobacter hominis (strain ATCC BAA-381 / DSM 21671 / CCUG 45161 / LMG 19568 / NCTC 13146 / CH001A).